We begin with the raw amino-acid sequence, 237 residues long: MGKRIISQNRGKGTPTYRAPSHRYKTDAKLLRFKDEVVAAKVIDIQHDSARNGPVALVKLPDGSETYILAVEGLGTGDVVYAGDNVEIASGNITYLKNIPEGTPVCNIEAQPGDGGKFIRASGTFGFVVSREADKVLVQMPSGKQKWFHPNCRAMIGVVAGGGRTDKPFVKAGKKYHKMKSKAAKWPRVRGVAMNAVDHPFGGGKHQHVGKPKTVSRNAPPGRKVGSIAARRTGVRR.

Residues 1–11 show a composition bias toward polar residues; sequence MGKRIISQNRG. Disordered regions lie at residues 1–20 and 201–237; these read MGKR…YRAP and FGGG…GVRR.

It belongs to the universal ribosomal protein uL2 family. In terms of assembly, part of the 50S ribosomal subunit. Forms a bridge to the 30S subunit in the 70S ribosome.

In terms of biological role, one of the primary rRNA binding proteins. Required for association of the 30S and 50S subunits to form the 70S ribosome, for tRNA binding and peptide bond formation. It has been suggested to have peptidyltransferase activity; this is somewhat controversial. Makes several contacts with the 16S rRNA in the 70S ribosome. This chain is Large ribosomal subunit protein uL2, found in Archaeoglobus fulgidus (strain ATCC 49558 / DSM 4304 / JCM 9628 / NBRC 100126 / VC-16).